Consider the following 191-residue polypeptide: Holliday junction branch migration complex subunit RuvA (191 aa).

Residues 1–64 are domain I; sequence MIGRLSGVLL…EDAHILFGFG (64 aa). A domain II region spans residues 65–137; it reads TNEERNVFKQ…LKGKLGADLG (73 aa). Residues 137-141 form a flexible linker region; sequence GVAGA. Positions 142–191 are domain III; sequence VATDATSDILNALLALGYSDKEAMLALKQVPAGTGVSDGIKLALKSLSKA.

The protein belongs to the RuvA family. As to quaternary structure, homotetramer. Forms an RuvA(8)-RuvB(12)-Holliday junction (HJ) complex. HJ DNA is sandwiched between 2 RuvA tetramers; dsDNA enters through RuvA and exits via RuvB. An RuvB hexamer assembles on each DNA strand where it exits the tetramer. Each RuvB hexamer is contacted by two RuvA subunits (via domain III) on 2 adjacent RuvB subunits; this complex drives branch migration. In the full resolvosome a probable DNA-RuvA(4)-RuvB(12)-RuvC(2) complex forms which resolves the HJ.

The protein resides in the cytoplasm. In terms of biological role, the RuvA-RuvB-RuvC complex processes Holliday junction (HJ) DNA during genetic recombination and DNA repair, while the RuvA-RuvB complex plays an important role in the rescue of blocked DNA replication forks via replication fork reversal (RFR). RuvA specifically binds to HJ cruciform DNA, conferring on it an open structure. The RuvB hexamer acts as an ATP-dependent pump, pulling dsDNA into and through the RuvAB complex. HJ branch migration allows RuvC to scan DNA until it finds its consensus sequence, where it cleaves and resolves the cruciform DNA. This is Holliday junction branch migration complex subunit RuvA from Janthinobacterium sp. (strain Marseille) (Minibacterium massiliensis).